Consider the following 105-residue polypeptide: Small ribosomal subunit protein uS10 (105 aa).

The protein belongs to the universal ribosomal protein uS10 family. As to quaternary structure, part of the 30S ribosomal subunit.

Functionally, involved in the binding of tRNA to the ribosomes. The sequence is that of Small ribosomal subunit protein uS10 from Rickettsia typhi (strain ATCC VR-144 / Wilmington).